Reading from the N-terminus, the 198-residue chain is Na(+)-translocating NADH-quinone reductase subunit E (198 aa).

6 helical membrane passes run 11–31 (SIFI…FLAV), 39–59 (MGLG…NNLI), 77–97 (FLSF…LEMA), 110–130 (GIFL…SFMV), 140–160 (VVYG…MAGI), and 176–196 (LGIT…FSGI).

It belongs to the NqrDE/RnfAE family. In terms of assembly, composed of six subunits; NqrA, NqrB, NqrC, NqrD, NqrE and NqrF.

The protein localises to the cell inner membrane. It carries out the reaction a ubiquinone + n Na(+)(in) + NADH + H(+) = a ubiquinol + n Na(+)(out) + NAD(+). In terms of biological role, NQR complex catalyzes the reduction of ubiquinone-1 to ubiquinol by two successive reactions, coupled with the transport of Na(+) ions from the cytoplasm to the periplasm. NqrA to NqrE are probably involved in the second step, the conversion of ubisemiquinone to ubiquinol. The chain is Na(+)-translocating NADH-quinone reductase subunit E from Aeromonas hydrophila subsp. hydrophila (strain ATCC 7966 / DSM 30187 / BCRC 13018 / CCUG 14551 / JCM 1027 / KCTC 2358 / NCIMB 9240 / NCTC 8049).